The following is a 214-amino-acid chain: Thymidylate kinase (214 aa).

ATP is bound at residue 7–14 (GIDGAGKS).

This sequence belongs to the thymidylate kinase family.

It carries out the reaction dTMP + ATP = dTDP + ADP. Functionally, phosphorylation of dTMP to form dTDP in both de novo and salvage pathways of dTTP synthesis. This is Thymidylate kinase from Chlorobium luteolum (strain DSM 273 / BCRC 81028 / 2530) (Pelodictyon luteolum).